We begin with the raw amino-acid sequence, 163 residues long: SsrA-binding protein (163 aa).

It belongs to the SmpB family.

It localises to the cytoplasm. Its function is as follows. Required for rescue of stalled ribosomes mediated by trans-translation. Binds to transfer-messenger RNA (tmRNA), required for stable association of tmRNA with ribosomes. tmRNA and SmpB together mimic tRNA shape, replacing the anticodon stem-loop with SmpB. tmRNA is encoded by the ssrA gene; the 2 termini fold to resemble tRNA(Ala) and it encodes a 'tag peptide', a short internal open reading frame. During trans-translation Ala-aminoacylated tmRNA acts like a tRNA, entering the A-site of stalled ribosomes, displacing the stalled mRNA. The ribosome then switches to translate the ORF on the tmRNA; the nascent peptide is terminated with the 'tag peptide' encoded by the tmRNA and targeted for degradation. The ribosome is freed to recommence translation, which seems to be the essential function of trans-translation. This is SsrA-binding protein from Shewanella baltica (strain OS223).